Here is a 376-residue protein sequence, read N- to C-terminus: Nucleoside diphosphate kinase homolog 7 (376 aa).

Positions 3 to 91 constitute a DM10 domain; that stretch reads HSERFVFIAE…YTARQLGSRK (89 aa).

It belongs to the NDK family. In terms of assembly, component of sperm flagellar doublet microtubules. Component of the gamma-tubulin ring complex. Post-translationally, undergoes autophosphorylation. As to expression, expressed in airway epithelial cells.

It is found in the cytoplasm. The protein resides in the cytoskeleton. It localises to the microtubule organizing center. The protein localises to the centrosome. Its subcellular location is the nucleus. It is found in the spindle. The protein resides in the cilium axoneme. It localises to the flagellum axoneme. The protein localises to the cell projection. Its subcellular location is the cilium. Its function is as follows. Possesses an intrinsic kinase activity. Displays 3'-5' exonuclease activity with a preference for single-stranded DNA. Does not seem to have nucleoside diphosphate kinase activity. Functional component of the gamma-tubulin ring complex, implicated in the regulation of the microtubule-nucleating activity of the gamma-tubulin ring complex in centrosomes, in a kinase activity-dependent manner. Part of the dynein-decorated doublet microtubules (DMTs) in cilia axoneme, which is required for motile cilia beating. The polypeptide is Nucleoside diphosphate kinase homolog 7 (Homo sapiens (Human)).